The chain runs to 302 residues: Sulfate adenylyltransferase subunit 2 (302 aa).

It belongs to the PAPS reductase family. CysD subfamily. In terms of assembly, heterodimer composed of CysD, the smaller subunit, and CysN.

It catalyses the reaction sulfate + ATP + H(+) = adenosine 5'-phosphosulfate + diphosphate. It participates in sulfur metabolism; hydrogen sulfide biosynthesis; sulfite from sulfate: step 1/3. In terms of biological role, with CysN forms the ATP sulfurylase (ATPS) that catalyzes the adenylation of sulfate producing adenosine 5'-phosphosulfate (APS) and diphosphate, the first enzymatic step in sulfur assimilation pathway. APS synthesis involves the formation of a high-energy phosphoric-sulfuric acid anhydride bond driven by GTP hydrolysis by CysN coupled to ATP hydrolysis by CysD. This chain is Sulfate adenylyltransferase subunit 2, found in Citrobacter koseri (strain ATCC BAA-895 / CDC 4225-83 / SGSC4696).